Here is a 388-residue protein sequence, read N- to C-terminus: GDP-4-keto-6-deoxy-D-mannose 3-dehydratase (388 aa).

26 to 29 (KMFT) is a binding site for GDP-4-dehydro-alpha-D-rhamnose. The chain crosses the membrane as a helical span at residues 49–69 (YAVMVSSGSTANLLMIAALFF). Residues 56–57 (GS), Trp-88, Glu-162, and Ser-183 each bind pyridoxal 5'-phosphate. Catalysis depends on His-188, which acts as the Proton donor/acceptor. His-215 is a binding site for L-glutamate. Arg-219 is a binding site for GDP-4-dehydro-alpha-D-rhamnose. Position 248 (Asn-248) interacts with pyridoxal 5'-phosphate. An L-glutamate-binding site is contributed by Arg-250. Glu-329 is a GDP-4-dehydro-alpha-D-rhamnose binding site.

This sequence belongs to the DegT/DnrJ/EryC1 family. Homodimer. Pyridoxal 5'-phosphate serves as cofactor.

It is found in the cell membrane. The enzyme catalyses GDP-4-dehydro-alpha-D-rhamnose + L-glutamate = GDP-4-dehydro-3,6-dideoxy-alpha-D-mannose + 2-oxoglutarate + NH4(+). The protein operates within nucleotide-sugar metabolism; GDP-L-colitose biosynthesis. Functionally, involved in the biosynthesis of L-colitose, a 3,6-dideoxyhexose present in the O-antigen region of lipopolysaccharides (LPS), where it serves as an antigenic determinant and is vital for bacterial defense and survival. Catalyzes the removal of the C3'-hydroxyl group from GDP-4-keto-6-deoxy-D-mannose via a combined transamination-deoxygenation reaction. The catalysis is initiated by a transamination step in which pyridoxal 5'-phosphate (PLP) is converted to pyridoxamine 5'-phosphate (PMP) in the presence of L-glutamate. This coenzyme then forms a Schiff base with GDP-4-keto-6-deoxy-D-mannose and the resulting adduct undergoes a PMP-mediated beta-dehydration reaction to give a sugar enamine intermediate, which after tautomerization and hydrolysis to release ammonia yields GDP-4-keto-3,6-dideoxy-D-mannose as a product. In vitro, is able to catalyze the formation of GDP-4-keto-3,6-dideoxymannose using GDP-perosamine rather than GDP-4-keto-6-deoxymannose as a substrate, with no need of glutamate. The protein is GDP-4-keto-6-deoxy-D-mannose 3-dehydratase of Escherichia coli O55:H7 (strain CB9615 / EPEC).